The chain runs to 1135 residues: Retinoblastoma-like protein 2 (1135 aa).

The interval 1–43 is disordered; the sequence is MASGGNQSPPPPPAAAASSEEEEEDGDAADRAQPAGSPSHQIQ. The residue at position 410 (Ser410) is a Phosphoserine. At Thr414 the chain carries Phosphothreonine. Residues 414–613 are domain A; the sequence is TPVSTAAHSL…DRIRDNENRV (200 aa). Residues 414-1021 form a pocket; binds E1A region; the sequence is TPVSTAAHSL…QAFAMKYSQA (608 aa). An O-linked (GlcNAc) serine glycan is attached at Ser417. A spacer region spans residues 614–824; it reads PTCEEVMPPQ…PGQPLTSSSI (211 aa). Phosphoserine is present on Ser636. The residue at position 639 (Thr639) is a Phosphothreonine. 8 positions are modified to phosphoserine: Ser659, Ser669, Ser684, Ser942, Ser946, Ser960, Ser965, and Ser967. Composition is skewed to polar residues over residues 661-674, 683-692, 935-950, and 958-969; these read TTLY…TVST, DSPSEGSTSG, SGSS…PTEL, and DSSPVMRSNSTL. 2 disordered regions span residues 661-698 and 930-994; these read TTLY…PPQP and GKRR…VEEE. The tract at residues 825-1021 is domain B; the sequence is RPRKTSSLAL…QAFAMKYSQA (197 aa). Thr968 is modified (phosphothreonine). Residues 971–981 show a composition bias toward pro residues; that stretch reads VPQPSSAPPTP. Phosphoserine occurs at positions 975 and 976. Thr980 carries the post-translational modification Phosphothreonine. 4 positions are modified to phosphoserine: Ser1031, Ser1064, Ser1076, and Ser1108.

Belongs to the retinoblastoma protein (RB) family. Interacts with AATF and RINT1. Component of the DREAM complex (also named LINC complex) at least composed of E2F4, E2F5, LIN9, LIN37, LIN52, LIN54, MYBL1, MYBL2, RBL1, RBL2, RBBP4, TFDP1 and TFDP2. The complex exists in quiescent cells where it represses cell cycle-dependent genes. It dissociates in S phase when LIN9, LIN37, LIN52 and LIN54 form a subcomplex that binds to MYBL2. Interacts with USP4. Interacts with KMT5B, KMT5C and USP4. Interacts with PML. Interacts with RBBP9. Interacts with CD53. Post-translationally, during G0 and early G1 phase of the cell cycle, phosphorylated on Ser-636 and on 5 sites within the domain B. Phosphorylation on Ser-669 in G1 leads to its ubiquitin-dependent proteolysis.

The protein localises to the nucleus. Key regulator of entry into cell division. Directly involved in heterochromatin formation by maintaining overall chromatin structure and, in particular, that of constitutive heterochromatin by stabilizing histone methylation. Recruits and targets histone methyltransferases KMT5B and KMT5C, leading to epigenetic transcriptional repression. Controls histone H4 'Lys-20' trimethylation. Probably acts as a transcription repressor by recruiting chromatin-modifying enzymes to promoters. Potent inhibitor of E2F-mediated trans-activation, associates preferentially with E2F5. Binds to cyclins A and E. Binds to and may be involved in the transforming capacity of the adenovirus E1A protein. May act as a tumor suppressor. This is Retinoblastoma-like protein 2 (Rbl2) from Mus musculus (Mouse).